The chain runs to 380 residues: Kappa-type opioid receptor (380 aa).

Over 1–57 the chain is Extracellular; sequence MESPIQIFRGEPGPTCAPSACLLPNSSSWFPNWAESDSNGSVGSEDQQLEPAHISPA. 2 N-linked (GlcNAc...) asparagine glycosylation sites follow: N25 and N39. The chain crosses the membrane as a helical span at residues 58 to 85; the sequence is IPVIITAVYSVVFVVGLVGNSLVMFVII. At 86–95 the chain is on the cytoplasmic side; sequence RYTKMKTATN. Residues 96–119 traverse the membrane as a helical segment; the sequence is IYIFNLALADALVTTTMPFQSAVY. Residues 120-132 are Extracellular-facing; that stretch reads LMNSWPFGDVLCK. C131 and C210 are disulfide-bonded. A helical membrane pass occupies residues 133–154; that stretch reads IVISIDYYNMFTSIFTLTMMSV. Over 155–173 the chain is Cytoplasmic; it reads DRYIAVCHPVKALDFRTPL. Residues 174 to 196 traverse the membrane as a helical segment; that stretch reads KAKIINICIWLLASSVGISAIVL. Residues 197-222 lie on the Extracellular side of the membrane; the sequence is GGTKVREDVDVIECSLQFPDDEYSWW. A helical transmembrane segment spans residues 223-247; the sequence is DLFMKICVFVFAFVIPVLIIIVCYT. The Cytoplasmic portion of the chain corresponds to 248 to 274; it reads LMILRLKSVRLLSGSREKDRNLRRITK. The chain crosses the membrane as a helical span at residues 275–296; sequence LVLVVVAVFIICWTPIHIFILV. The Extracellular portion of the chain corresponds to 297–311; that stretch reads EALGSTSHSTAVLSS. A helical transmembrane segment spans residues 312–333; that stretch reads YYFCIALGYTNSSLNPVLYAFL. Topologically, residues 334-380 are cytoplasmic; it reads DENFKRCFRDFCFPIKMRMERQSTNRVRNTVQDPASMRDVGGMNKPV. Residue C345 is the site of S-palmitoyl cysteine attachment.

This sequence belongs to the G-protein coupled receptor 1 family. Interacts with NHERF1. Interacts with GABARAPL1.

The protein resides in the cell membrane. G-protein coupled opioid receptor that functions as a receptor for endogenous alpha-neoendorphins and dynorphins, but has low affinity for beta-endorphins. Also functions as a receptor for various synthetic opioids and for the psychoactive diterpene salvinorin A. Ligand binding causes a conformation change that triggers signaling via guanine nucleotide-binding proteins (G proteins) and modulates the activity of down-stream effectors, such as adenylate cyclase. Signaling leads to the inhibition of adenylate cyclase activity. Inhibits neurotransmitter release by reducing calcium ion currents and increasing potassium ion conductance. Plays a role in the perception of pain. Plays a role in mediating reduced physical activity upon treatment with synthetic opioids. Plays a role in the regulation of salivation in response to synthetic opioids. May play a role in arousal and regulation of autonomic and neuroendocrine functions. This Rattus norvegicus (Rat) protein is Kappa-type opioid receptor (Oprk1).